We begin with the raw amino-acid sequence, 215 residues long: Thiamine import ATP-binding protein ThiQ (215 aa).

The ABC transporter domain maps to 2 to 215 (IYLNNVILND…GQISQLQKGV (214 aa)). An ATP-binding site is contributed by 32-39 (GESGAGKS).

The protein belongs to the ABC transporter superfamily. Thiamine importer (TC 3.A.1.19.1) family. As to quaternary structure, the complex is composed of two ATP-binding proteins (ThiQ), two transmembrane proteins (ThiP) and a solute-binding protein (ThiB).

Its subcellular location is the cell inner membrane. The enzyme catalyses thiamine(out) + ATP + H2O = thiamine(in) + ADP + phosphate + H(+). Part of the ABC transporter complex ThiBPQ involved in thiamine import. Responsible for energy coupling to the transport system. This Haemophilus influenzae (strain ATCC 51907 / DSM 11121 / KW20 / Rd) protein is Thiamine import ATP-binding protein ThiQ.